The sequence spans 678 residues: NADPH--cytochrome P450 reductase (678 aa).

Glycine 2 is modified (N-acetylglycine). The Lumenal segment spans residues 2 to 22; that stretch reads GDSHEDTSATMPEAVAEEVSL. Residues 23 to 43 traverse the membrane as a helical segment; that stretch reads FSTTDMVLFSLIVGVLTYWFI. The Cytoplasmic segment spans residues 44–678; it reads FRKKKEEIPE…KGRYSLDVWS (635 aa). A Flavodoxin-like domain is found at 80 to 224; the sequence is IIVFYGSQTG…DFITWREQFW (145 aa). FMN is bound by residues 86 to 91, 138 to 141, 173 to 182, and aspartate 208; these read SQTGTA, ATYG, and LGNKTYEHFN. Residues 279 to 521 form the FAD-binding FR-type domain; it reads KNPFLAAVTA…FVRKSQFRLP (243 aa). Arginine 298 provides a ligand contact to NADP(+). Residues arginine 424, 454 to 457, 472 to 474, tyrosine 478, and 488 to 491 contribute to the FAD site; these read RYYS, CAV, and GVAT. NADP(+) is bound by residues threonine 535, 596–597, 602–606, and aspartate 639; these read SR and KVYVQ. Tryptophan 677 lines the FAD pocket.

The protein belongs to the NADPH--cytochrome P450 reductase family. This sequence in the N-terminal section; belongs to the flavodoxin family. In the C-terminal section; belongs to the flavoprotein pyridine nucleotide cytochrome reductase family. FAD is required as a cofactor. The cofactor is FMN.

The protein localises to the endoplasmic reticulum membrane. The catalysed reaction is 2 oxidized [cytochrome P450] + NADPH = 2 reduced [cytochrome P450] + NADP(+) + H(+). Functionally, this enzyme is required for electron transfer from NADP to cytochrome P450 in microsomes. It can also provide electron transfer to heme oxygenase and cytochrome B5. The polypeptide is NADPH--cytochrome P450 reductase (Rattus norvegicus (Rat)).